A 267-amino-acid polypeptide reads, in one-letter code: Probable beta-lactamase YbxI (267 aa).

The first 23 residues, 1–23 (MKKWIYVVLVLSIAGIGGFSVHA), serve as a signal peptide directing secretion. Ser76 acts as the Acyl-ester intermediate in catalysis. Position 79 is an N6-carboxylysine (Lys79). 214–216 (KTG) contacts substrate.

It belongs to the class-D beta-lactamase family.

It carries out the reaction a beta-lactam + H2O = a substituted beta-amino acid. The sequence is that of Probable beta-lactamase YbxI (ybxI) from Bacillus subtilis (strain 168).